The chain runs to 394 residues: Elongation factor Tu (394 aa).

The tr-type G domain occupies 10 to 204 (KPHVNVGTIG…ALDSYIPEPE (195 aa)). Positions 19–26 (GHVDHGKT) are G1. GTP is bound at residue 19-26 (GHVDHGKT). Thr26 is a binding site for Mg(2+). The interval 60–64 (GITIN) is G2. The G3 stretch occupies residues 81-84 (DCPG). GTP is bound by residues 81-85 (DCPGH) and 136-139 (NKCD). A G4 region spans residues 136-139 (NKCD). The tract at residues 174–176 (SAL) is G5.

It belongs to the TRAFAC class translation factor GTPase superfamily. Classic translation factor GTPase family. EF-Tu/EF-1A subfamily. Monomer.

It localises to the cytoplasm. It catalyses the reaction GTP + H2O = GDP + phosphate + H(+). Functionally, GTP hydrolase that promotes the GTP-dependent binding of aminoacyl-tRNA to the A-site of ribosomes during protein biosynthesis. The polypeptide is Elongation factor Tu (Sodalis glossinidius (strain morsitans)).